The sequence spans 420 residues: Gamma-glutamyl phosphate reductase (420 aa).

Belongs to the gamma-glutamyl phosphate reductase family.

The protein resides in the cytoplasm. The catalysed reaction is L-glutamate 5-semialdehyde + phosphate + NADP(+) = L-glutamyl 5-phosphate + NADPH + H(+). The protein operates within amino-acid biosynthesis; L-proline biosynthesis; L-glutamate 5-semialdehyde from L-glutamate: step 2/2. In terms of biological role, catalyzes the NADPH-dependent reduction of L-glutamate 5-phosphate into L-glutamate 5-semialdehyde and phosphate. The product spontaneously undergoes cyclization to form 1-pyrroline-5-carboxylate. The chain is Gamma-glutamyl phosphate reductase from Alkalilimnicola ehrlichii (strain ATCC BAA-1101 / DSM 17681 / MLHE-1).